Reading from the N-terminus, the 1523-residue chain is Slit homolog 3 protein (1523 aa).

Residues 1–33 (MALGRTGAGAAVRARLALGLALASILSGPPAAA) form the signal peptide. Residues 34 to 61 (CPTKCTCSAASVDCHGLGLRAVPRGIPR) enclose the LRRNT domain. LRR repeat units lie at residues 62–83 (NAER…DFAG), 86–107 (NLRV…AFQD), 110–131 (QLER…LFQS), 134–155 (KLTR…AFRG), 158–179 (GVKN…AFRA), and 182–203 (DLEI…SFNH). Asn72 carries N-linked (GlcNAc...) asparagine glycosylation. An N-linked (GlcNAc...) asparagine glycan is attached at Asn192. Positions 215-265 (NHLYCDCHLAWLSDWLRQRRTIGQFTLCMAPVHLRGFSVADVQKKEYVCPG) constitute an LRRCT 1 domain. In terms of domain architecture, LRRNT 2 spans 271-307 (PACNANSLSCPSACSCSNNIVDCRGKGLTEIPANLPE). Residues Cys284 and Cys293 are joined by a disulfide bond. LRR repeat units follow at residues 308 to 329 (GIVE…AFTQ), 332 to 353 (KLKR…AFQG), 356 to 377 (SLTS…LFDG), 380 to 401 (SLQL…TFQD), and 404 to 425 (NLNL…LFVP). Residues 437–487 (NPFVCDCHLKWLADYLQDNPIETSGARCSSPRRLANKRISQIKSKKFRCSG) form the LRRCT 2 domain. 4 disulfides stabilise this stretch: Cys441-Cys464, Cys443-Cys485, Cys505-Cys511, and Cys509-Cys518. One can recognise an LRRNT 3 domain in the interval 496 to 532 (SSECFMDLVCPEKCRCEGTIVDCSNQKLARIPSHLPE). LRR repeat units follow at residues 533-554 (YTTD…GIFK), 558-579 (NLRK…AFDG), 582-603 (GVQE…MFRG), 606-627 (SLKT…TFAG), and 630-651 (SVRL…AFTT). Asn563 carries N-linked (GlcNAc...) asparagine glycosylation. N-linked (GlcNAc...) asparagine glycosylation occurs at Asn622. Residues 663–713 (NPFNCNCHMAWLGRWLRKRRIVSGNPRCQKPFFLKEIPIQDVAIQDFTCDG) enclose the LRRCT 3 domain. 2 disulfide bridges follow: Cys667–Cys690 and Cys669–Cys711. The 37-residue stretch at 716–752 (ESSCQLSPRCPEQCTCVETVVRCSNRGLHALPKGMPK) folds into the LRRNT 4 domain. 4 LRR repeats span residues 753-774 (DVTE…LSAF), 776-797 (QLTL…TFSN), 800-821 (HLST…AFNG), and 824-845 (SLRV…SFND). N-linked (GlcNAc...) asparagine glycosylation is found at Asn784, Asn792, and Asn797. The LRRCT 4 domain maps to 857–907 (NPLHCDCSLRWLSEWVKAGYKEPGIARCSSPESMADRLLLTTPTHRFQCKG). EGF-like domains follow at residues 918–953 (NACL…KDCT), 955–994 (PINT…QRCE), 996–1032 (NPDD…ELCD), 1034–1072 (VIDY…KLCE), 1074–1110 (NNDD…LFCE), and 1119–1155 (QTSP…PRCE). Disulfide bonds link Cys920-Cys931, Cys925-Cys941, Cys943-Cys952, Cys959-Cys970, Cys964-Cys982, Cys984-Cys993, Cys1000-Cys1011, Cys1005-Cys1020, Cys1022-Cys1031, Cys1038-Cys1051, Cys1045-Cys1060, Cys1062-Cys1071, Cys1078-Cys1089, Cys1083-Cys1098, Cys1100-Cys1109, Cys1123-Cys1134, Cys1128-Cys1143, and Cys1145-Cys1154. Asn928 carries N-linked (GlcNAc...) asparagine glycosylation. The N-linked (GlcNAc...) asparagine glycan is linked to Asn1025. One can recognise a Laminin G-like domain in the interval 1158-1332 (ITVNFVGKDS…PQSLGVSPGC (175 aa)). N-linked (GlcNAc...) asparagine glycosylation is found at Asn1181 and Asn1247. 5 cysteine pairs are disulfide-bonded: Cys1305-Cys1332, Cys1355-Cys1364, Cys1372-Cys1382, Cys1377-Cys1391, and Cys1393-Cys1402. 2 consecutive EGF-like domains span residues 1340-1365 (HGLC…PLCD) and 1368-1403 (ARDP…ALCD). A glycan (N-linked (GlcNAc...) asparagine) is linked at Asn1406. Residues 1408–1444 (SASACSAFKCHHGQCHISDRGEPYCLCQPGFSGHHCE) enclose the EGF-like 9 domain. Cystine bridges form between Cys1412–Cys1422, Cys1417–Cys1432, Cys1434–Cys1443, Cys1449–Cys1487, Cys1467–Cys1501, Cys1478–Cys1517, and Cys1482–Cys1519. In terms of domain architecture, CTCK spans 1449-1523 (CMGEIVREAI…HLECGCRACS (75 aa)).

The protein resides in the secreted. In terms of biological role, may act as molecular guidance cue in cellular migration, and function may be mediated by interaction with roundabout homolog receptors. The chain is Slit homolog 3 protein (Slit3) from Mus musculus (Mouse).